The chain runs to 210 residues: Calcineurin B-like protein 4 (210 aa).

The N-myristoyl glycine moiety is linked to residue Gly2. 4 consecutive EF-hand domains span residues 31–66 (EVEA…RNSR), 67–102 (KANL…FHPK), 104–139 (PKSE…LLDE), and 148–183 (AVEA…NPAS). Ca(2+) contacts are provided by Asp161, Asn163, Asp165, Arg167, and Glu172.

It belongs to the calcineurin regulatory subunit family. As to quaternary structure, homodimer. Interacts with CIPK24. In terms of tissue distribution, expressed in leaves.

Its subcellular location is the cell membrane. Functionally, acts as a calcium sensor involved in the regulatory pathway for the control of intracellular Na(+) and K(+) homeostasis and salt tolerance. Operates in synergy with CIPK24 to activate the plasma membrane Na(+)/H(+) antiporter SOS1. May function as positive regulator of salt stress responses. CBL proteins interact with CIPK serine-threonine protein kinases. Binding of a CBL protein to the regulatory NAF domain of a CIPK protein lead to the activation of the kinase in a calcium-dependent manner. The protein is Calcineurin B-like protein 4 (CBL4) of Oryza sativa subsp. japonica (Rice).